Reading from the N-terminus, the 216-residue chain is Adenylate kinase (216 aa).

Residue 10 to 15 (GAGKGT) coordinates ATP. An NMP region spans residues 30 to 59 (STGDILRENVKKGTALGLKAKSYMDKGELV). Residues T31, R36, 57-59 (ELV), 85-88 (GFPR), and Q92 contribute to the AMP site. An LID region spans residues 126 to 163 (GRRICRSCGASYHLVFNPPKAKDLCDSCGGELYQRDDD). R127 is a binding site for ATP. Zn(2+) is bound by residues C130 and C133. 136-137 (SY) contributes to the ATP binding site. Zn(2+) is bound by residues C150 and C153. AMP is bound by residues R160 and R171. K199 serves as a coordination point for ATP.

This sequence belongs to the adenylate kinase family. Monomer.

The protein resides in the cytoplasm. It catalyses the reaction AMP + ATP = 2 ADP. It participates in purine metabolism; AMP biosynthesis via salvage pathway; AMP from ADP: step 1/1. In terms of biological role, catalyzes the reversible transfer of the terminal phosphate group between ATP and AMP. Plays an important role in cellular energy homeostasis and in adenine nucleotide metabolism. In Methanocella arvoryzae (strain DSM 22066 / NBRC 105507 / MRE50), this protein is Adenylate kinase.